The chain runs to 83 residues: Cytochrome b559 subunit alpha (83 aa).

A helical transmembrane segment spans residues 21–35 (VIHSITIPSLFIAGW). Position 23 (histidine 23) interacts with heme.

The protein belongs to the PsbE/PsbF family. As to quaternary structure, heterodimer of an alpha subunit and a beta subunit. PSII is composed of 1 copy each of membrane proteins PsbA, PsbB, PsbC, PsbD, PsbE, PsbF, PsbH, PsbI, PsbJ, PsbK, PsbL, PsbM, PsbT, PsbX, PsbY, PsbZ, Psb30/Ycf12, at least 3 peripheral proteins of the oxygen-evolving complex and a large number of cofactors. It forms dimeric complexes. Heme b serves as cofactor.

The protein localises to the plastid. Its subcellular location is the chloroplast thylakoid membrane. Functionally, this b-type cytochrome is tightly associated with the reaction center of photosystem II (PSII). PSII is a light-driven water:plastoquinone oxidoreductase that uses light energy to abstract electrons from H(2)O, generating O(2) and a proton gradient subsequently used for ATP formation. It consists of a core antenna complex that captures photons, and an electron transfer chain that converts photonic excitation into a charge separation. This is Cytochrome b559 subunit alpha from Tupiella akineta (Green alga).